We begin with the raw amino-acid sequence, 943 residues long: Nuclear receptor coactivator 7 (943 aa).

At methionine 1 the chain carries N-acetylmethionine. The span at 1–15 (MDTKEEKKEQKERKQ) shows a compositional bias: basic and acidic residues. The stretch at 1-32 (MDTKEEKKEQKERKQSYFARLKKKKQAKQNAE) forms a coiled coil. A disordered region spans residues 1-83 (MDTKEEKKEQ…RKSNQLKEIR (83 aa)). Serine 92 is subject to Phosphoserine. The LysM domain maps to 117–160 (MEYTAGSQDTLNSVALKFNVTPNKLVELNKLFTHTIVPGQVLFV). The residue at position 137 (threonine 137) is a Phosphothreonine. Residues 169-189 (TIQLSSSTPGATVSPSSSDAE) are disordered. Residues 177-187 (PGATVSPSSSD) are compositionally biased toward polar residues. Serine 182, serine 186, serine 211, serine 212, and serine 214 each carry phosphoserine. Residues 334-369 (EKRQQNGERTLALDAKSVRSPEESTERTCTRIEPPD) form a disordered region. Residues 349–369 (KSVRSPEESTERTCTRIEPPD) show a composition bias toward basic and acidic residues. 3 positions are modified to phosphoserine: serine 442, serine 498, and serine 500. Residues 486 to 499 (EKQDEAPEVDKHSG) show a composition bias toward basic and acidic residues. 2 disordered regions span residues 486–507 (EKQD…LGES) and 543–576 (LSDR…NKEP). The 162-residue stretch at 782–943 (ALLENMHIEQ…VQDLEVWTFE (162 aa)) folds into the TLDc domain.

It belongs to the OXR1 family. As to quaternary structure, interacts with ESR1, ESR2A, ESR2B, THRB, PPARG and RARA in a ligand-inducible manner. Interacts with the heterodimer AHR-ARNT. Highly expressed in brain and kidney. Weakly expressed in mammary gland, lung and testis. In brain, expression is found in neurons of cerebral cortex, thalamus, hypothalamus, hippocampus, cerebellum, striatum and choroid plexus.

It is found in the nucleus. Functionally, enhances the transcriptional activities of several nuclear receptors. Involved in the coactivation of different nuclear receptors, such as ESR1, THRB, PPARG and RARA. This is Nuclear receptor coactivator 7 (Ncoa7) from Mus musculus (Mouse).